We begin with the raw amino-acid sequence, 192 residues long: dTTP/UTP pyrophosphatase (192 aa).

Asp-72 functions as the Proton acceptor in the catalytic mechanism.

Belongs to the Maf family. YhdE subfamily. A divalent metal cation serves as cofactor.

It localises to the cytoplasm. It carries out the reaction dTTP + H2O = dTMP + diphosphate + H(+). The enzyme catalyses UTP + H2O = UMP + diphosphate + H(+). Its function is as follows. Nucleoside triphosphate pyrophosphatase that hydrolyzes dTTP and UTP. May have a dual role in cell division arrest and in preventing the incorporation of modified nucleotides into cellular nucleic acids. The chain is dTTP/UTP pyrophosphatase from Geobacter metallireducens (strain ATCC 53774 / DSM 7210 / GS-15).